The following is a 181-amino-acid chain: SecB-like chaperone MT2006 (181 aa).

This sequence belongs to the SecB-like family. In terms of assembly, homotetramer, interacts with antitoxin HigA1.

Its function is as follows. Chaperone component of an atypical, type II toxin-antitoxin chaperone (TAC) module, probably required for antitoxin HigA1 to neutralize its cognate toxin HigB1. The polypeptide is SecB-like chaperone MT2006 (secBL) (Mycobacterium tuberculosis (strain CDC 1551 / Oshkosh)).